A 384-amino-acid polypeptide reads, in one-letter code: Probable beta-1,3-galactosyltransferase 1 (384 aa).

The chain crosses the membrane as a helical; Signal-anchor for type II membrane protein span at residues 21 to 43; that stretch reads SVFFMCLASFCLGMFFTNRMWNI. N-linked (GlcNAc...) asparagine glycosylation is found at N73 and N105.

The protein belongs to the glycosyltransferase 31 family. Requires Mn(2+) as cofactor.

It localises to the golgi apparatus membrane. It functions in the pathway protein modification; protein glycosylation. Its function is as follows. Beta-1,3-galactosyltransferase that transfers galactose from UDP-galactose to substrates with a terminal glycosyl residue. The chain is Probable beta-1,3-galactosyltransferase 1 (B3GALT1) from Arabidopsis thaliana (Mouse-ear cress).